The chain runs to 507 residues: ATP synthase subunit alpha, chloroplastic (507 aa).

170–177 (GDRQTGKT) contacts ATP.

Belongs to the ATPase alpha/beta chains family. In terms of assembly, F-type ATPases have 2 components, CF(1) - the catalytic core - and CF(0) - the membrane proton channel. CF(1) has five subunits: alpha(3), beta(3), gamma(1), delta(1), epsilon(1). CF(0) has four main subunits: a, b, b' and c.

The protein resides in the plastid. It localises to the chloroplast thylakoid membrane. It carries out the reaction ATP + H2O + 4 H(+)(in) = ADP + phosphate + 5 H(+)(out). In terms of biological role, produces ATP from ADP in the presence of a proton gradient across the membrane. The alpha chain is a regulatory subunit. This is ATP synthase subunit alpha, chloroplastic from Physcomitrium patens (Spreading-leaved earth moss).